The sequence spans 230 residues: Phosphoenolpyruvate guanylyltransferase (230 aa).

Phosphoenolpyruvate contacts are provided by threonine 139, glycine 155, and serine 158.

This sequence belongs to the CofC family.

It carries out the reaction phosphoenolpyruvate + GTP + H(+) = enolpyruvoyl-2-diphospho-5'-guanosine + diphosphate. It functions in the pathway cofactor biosynthesis; coenzyme F420 biosynthesis. Functionally, guanylyltransferase that catalyzes the activation of phosphoenolpyruvate (PEP) as enolpyruvoyl-2-diphospho-5'-guanosine, via the condensation of PEP with GTP. It is involved in the biosynthesis of coenzyme F420, a hydride carrier cofactor. The chain is Phosphoenolpyruvate guanylyltransferase from Thermobaculum terrenum (strain ATCC BAA-798 / CCMEE 7001 / YNP1).